The chain runs to 118 residues: Large ribosomal subunit protein uL18 (118 aa).

The protein belongs to the universal ribosomal protein uL18 family. As to quaternary structure, part of the 50S ribosomal subunit; part of the 5S rRNA/L5/L18/L25 subcomplex. Contacts the 5S and 23S rRNAs.

Its function is as follows. This is one of the proteins that bind and probably mediate the attachment of the 5S RNA into the large ribosomal subunit, where it forms part of the central protuberance. This Dechloromonas aromatica (strain RCB) protein is Large ribosomal subunit protein uL18.